Here is a 335-residue protein sequence, read N- to C-terminus: Eukaryotic translation initiation factor 3 subunit I (335 aa).

WD repeat units follow at residues 8–47 (GHER…RLGT), 50–91 (GHQG…KTWD), 145–184 (CAES…LLFN), 189–228 (EPDL…VMKT), and 286–325 (GHFG…FDFT).

It belongs to the eIF-3 subunit I family. In terms of assembly, component of the eukaryotic translation initiation factor 3 (eIF-3) complex.

The protein resides in the cytoplasm. Component of the eukaryotic translation initiation factor 3 (eIF-3) complex, which is involved in protein synthesis of a specialized repertoire of mRNAs and, together with other initiation factors, stimulates binding of mRNA and methionyl-tRNAi to the 40S ribosome. The eIF-3 complex specifically targets and initiates translation of a subset of mRNAs involved in cell proliferation. The chain is Eukaryotic translation initiation factor 3 subunit I (tif34) from Sclerotinia sclerotiorum (strain ATCC 18683 / 1980 / Ss-1) (White mold).